Consider the following 877-residue polypeptide: DNA mismatch repair protein MutS (877 aa).

630–637 (GPNMAGKS) provides a ligand contact to ATP.

The protein belongs to the DNA mismatch repair MutS family.

In terms of biological role, this protein is involved in the repair of mismatches in DNA. It is possible that it carries out the mismatch recognition step. This protein has a weak ATPase activity. This is DNA mismatch repair protein MutS from Jannaschia sp. (strain CCS1).